Here is a 232-residue protein sequence, read N- to C-terminus: Large ribosomal subunit protein uL1 (232 aa).

This sequence belongs to the universal ribosomal protein uL1 family. In terms of assembly, part of the 50S ribosomal subunit.

Its function is as follows. Binds directly to 23S rRNA. The L1 stalk is quite mobile in the ribosome, and is involved in E site tRNA release. Functionally, protein L1 is also a translational repressor protein, it controls the translation of the L11 operon by binding to its mRNA. This chain is Large ribosomal subunit protein uL1, found in Bordetella petrii (strain ATCC BAA-461 / DSM 12804 / CCUG 43448).